We begin with the raw amino-acid sequence, 539 residues long: O-phosphoserine--tRNA(Cys) ligase (539 aa).

Substrate-binding positions include 188–190, 233–235, 275–276, and Asn327; these read HMT, SAS, and YY.

It belongs to the class-II aminoacyl-tRNA synthetase family. O-phosphoseryl-tRNA(Cys) synthetase subfamily. As to quaternary structure, homotetramer. Interacts with SepCysS.

It carries out the reaction tRNA(Cys) + O-phospho-L-serine + ATP = O-phospho-L-seryl-tRNA(Cys) + AMP + diphosphate. Catalyzes the attachment of O-phosphoserine (Sep) to tRNA(Cys). The sequence is that of O-phosphoserine--tRNA(Cys) ligase from Methanococcoides burtonii (strain DSM 6242 / NBRC 107633 / OCM 468 / ACE-M).